A 327-amino-acid chain; its full sequence is Probable cytosolic iron-sulfur protein assembly protein CIAO1 homolog (327 aa).

WD repeat units lie at residues 3–42 (GHED…WICK), 48–87 (GHQR…FECN), 92–131 (GHEN…EYEC), 137–176 (SHTQ…WSCC), 181–220 (GHES…NQEG), 239–278 (YHDR…DRNQ), and 290–327 (AHSM…PAEE).

Belongs to the WD repeat CIA1 family.

Essential component of the cytosolic iron-sulfur (Fe/S) protein assembly machinery. Required for the maturation of extramitochondrial Fe/S proteins. The sequence is that of Probable cytosolic iron-sulfur protein assembly protein CIAO1 homolog from Nematostella vectensis (Starlet sea anemone).